The following is a 201-amino-acid chain: Peptidyl-prolyl cis-trans isomerase CYP19-4 (201 aa).

A signal peptide spans 1-23 (MAKASFILLGTLFLFGAIASIQA). The PPIase cyclophilin-type domain maps to 35–198 (YFDVEIDGKS…SKVVIADSGE (164 aa)).

Belongs to the cyclophilin-type PPIase family. In terms of assembly, interacts with EMB30/GNOM. As to expression, ubiquitous, mostly in aerial organs (at protein level).

Its subcellular location is the cytoplasm. The protein resides in the membrane. It localises to the endoplasmic reticulum. The protein localises to the secreted. The enzyme catalyses [protein]-peptidylproline (omega=180) = [protein]-peptidylproline (omega=0). Its activity is regulated as follows. Binds cyclosporin A (CsA). CsA mediates some of its effects via an inhibitory action on PPIase. Functionally, PPIases accelerate the folding of proteins. It catalyzes the cis-trans isomerization of proline imidic peptide bonds in oligopeptides. May be involved during embryogenesis and organ development by regulating the folding of EMB30/GNOM, and thus, by modulating its activity. The sequence is that of Peptidyl-prolyl cis-trans isomerase CYP19-4 (CYP19-4) from Arabidopsis thaliana (Mouse-ear cress).